The following is a 333-amino-acid chain: Glycerol-3-phosphate dehydrogenase [NAD(P)+] (333 aa).

3 residues coordinate NADPH: W12, K33, and K105. Sn-glycerol 3-phosphate-binding residues include K105, G136, and S138. An NADPH-binding site is contributed by A140. Positions 191, 244, 254, 255, and 256 each coordinate sn-glycerol 3-phosphate. Catalysis depends on K191, which acts as the Proton acceptor. R255 provides a ligand contact to NADPH. 2 residues coordinate NADPH: V279 and E281.

Belongs to the NAD-dependent glycerol-3-phosphate dehydrogenase family.

The protein localises to the cytoplasm. It catalyses the reaction sn-glycerol 3-phosphate + NAD(+) = dihydroxyacetone phosphate + NADH + H(+). It carries out the reaction sn-glycerol 3-phosphate + NADP(+) = dihydroxyacetone phosphate + NADPH + H(+). The protein operates within membrane lipid metabolism; glycerophospholipid metabolism. In terms of biological role, catalyzes the reduction of the glycolytic intermediate dihydroxyacetone phosphate (DHAP) to sn-glycerol 3-phosphate (G3P), the key precursor for phospholipid synthesis. The protein is Glycerol-3-phosphate dehydrogenase [NAD(P)+] of Protochlamydia amoebophila (strain UWE25).